The following is a 1375-amino-acid chain: ARF guanine-nucleotide exchange factor GNL2 (1375 aa).

Positions 486-676 (HIRVRKAQKR…SELFQSIATN (191 aa)) constitute an SEC7 domain. Glu590 is an active-site residue.

Homodimer. Preferentially expressed in mature pollen grains and growing pollen tubes.

The protein resides in the cytoplasm. It is found in the cytosol. It localises to the membrane. Its function is as follows. Activates the ARF proteins by exchanging bound GDP for free GTP. Plays a role in vesicular protein sorting. Essential for pollen germination. This Arabidopsis thaliana (Mouse-ear cress) protein is ARF guanine-nucleotide exchange factor GNL2 (GNL2).